The following is a 115-amino-acid chain: Large ribosomal subunit protein bL35m (115 aa).

Belongs to the bacterial ribosomal protein bL35 family.

It is found in the mitochondrion. This chain is Large ribosomal subunit protein bL35m, found in Saccharomyces cerevisiae (strain YJM789) (Baker's yeast).